Consider the following 180-residue polypeptide: ATP synthase subunit b (180 aa).

The helical transmembrane segment at 26-46 (IPLMLATLAALVISIFFLTYF) threads the bilayer.

This sequence belongs to the ATPase B chain family. F-type ATPases have 2 components, F(1) - the catalytic core - and F(0) - the membrane proton channel. F(1) has five subunits: alpha(3), beta(3), gamma(1), delta(1), epsilon(1). F(0) has three main subunits: a(1), b(2) and c(10-14). The alpha and beta chains form an alternating ring which encloses part of the gamma chain. F(1) is attached to F(0) by a central stalk formed by the gamma and epsilon chains, while a peripheral stalk is formed by the delta and b chains.

It localises to the cell membrane. F(1)F(0) ATP synthase produces ATP from ADP in the presence of a proton or sodium gradient. F-type ATPases consist of two structural domains, F(1) containing the extramembraneous catalytic core and F(0) containing the membrane proton channel, linked together by a central stalk and a peripheral stalk. During catalysis, ATP synthesis in the catalytic domain of F(1) is coupled via a rotary mechanism of the central stalk subunits to proton translocation. Its function is as follows. Component of the F(0) channel, it forms part of the peripheral stalk, linking F(1) to F(0). This chain is ATP synthase subunit b, found in Mycoplasmopsis pulmonis (strain UAB CTIP) (Mycoplasma pulmonis).